The sequence spans 229 residues: 5'-methylthioadenosine/S-adenosylhomocysteine nucleosidase (229 aa).

E12 serves as the catalytic Proton acceptor. Residues G78, I152, and 173 to 174 (ME) contribute to the substrate site. Residue D197 is the Proton donor of the active site.

This sequence belongs to the PNP/UDP phosphorylase family. MtnN subfamily.

The catalysed reaction is S-adenosyl-L-homocysteine + H2O = S-(5-deoxy-D-ribos-5-yl)-L-homocysteine + adenine. It carries out the reaction S-methyl-5'-thioadenosine + H2O = 5-(methylsulfanyl)-D-ribose + adenine. The enzyme catalyses 5'-deoxyadenosine + H2O = 5-deoxy-D-ribose + adenine. It functions in the pathway amino-acid biosynthesis; L-methionine biosynthesis via salvage pathway; S-methyl-5-thio-alpha-D-ribose 1-phosphate from S-methyl-5'-thioadenosine (hydrolase route): step 1/2. Functionally, catalyzes the irreversible cleavage of the glycosidic bond in both 5'-methylthioadenosine (MTA) and S-adenosylhomocysteine (SAH/AdoHcy) to adenine and the corresponding thioribose, 5'-methylthioribose and S-ribosylhomocysteine, respectively. Also cleaves 5'-deoxyadenosine, a toxic by-product of radical S-adenosylmethionine (SAM) enzymes, into 5-deoxyribose and adenine. This chain is 5'-methylthioadenosine/S-adenosylhomocysteine nucleosidase, found in Histophilus somni (strain 129Pt) (Haemophilus somnus).